The chain runs to 340 residues: Maltose epimerase (340 aa).

Residue Arg79 coordinates substrate. His178 serves as the catalytic Proton donor. Asp247 serves as a coordination point for substrate. Catalysis depends on Glu305, which acts as the Proton acceptor.

This sequence belongs to the aldose epimerase family.

The enzyme catalyses alpha-maltose = beta-maltose. It participates in carbohydrate metabolism; hexose metabolism. Functionally, catalyzes the interconversion of alpha and beta anomers of maltose. The sequence is that of Maltose epimerase from Levilactobacillus brevis (strain ATCC 367 / BCRC 12310 / CIP 105137 / JCM 1170 / LMG 11437 / NCIMB 947 / NCTC 947) (Lactobacillus brevis).